Here is a 473-residue protein sequence, read N- to C-terminus: MQPFVLYNSEQRKKVEFVPRKEGHIDMYVCGMTVYDYCHIGHARVMVAFDYIIRFLRSQGWKVRYIRNITDIDDKIIKRANENGETIQQLTTRFIDAMNEDAANLGCLAPDEAPKATEYIDQMQNMIGNLVNKGAAYPASNGDVYFEVTKFEKYGRLSGRKLDDMQAGASERIDVEVEKKHPFDFVLWKHAKENEPSWASPWGNGRPGWHIECSAMSTCCLGNHFDIHGGGSDLMFPHHENEIAQSEASTGEQYVNYWMHVGFINVDGEKMSKSLGNFFTIRDVMEKFHPEVIRYFIVSSHYRSPVNFSDVALKEAKTSLTRFYHSFKAYQQVYGQTTTEALDQSFIERFNNAMCDDFNTAEAMAVLFELNKELNRAVKEEQADQATVLYSTLRHLTNILGLVQHNVDDFLKSDIGQDALALSDAEIEDFIQQRVDAKKAKDFAKADSIRQSLLEQGVVLEDTRQGTVWRRAD.

Cysteine 30 is a Zn(2+) binding site. The short motif at 32–42 (MTVYDYCHIGH) is the 'HIGH' region element. Residues cysteine 213, histidine 238, and glutamate 242 each contribute to the Zn(2+) site. A 'KMSKS' region motif is present at residues 270-274 (KMSKS). Residue lysine 273 coordinates ATP.

This sequence belongs to the class-I aminoacyl-tRNA synthetase family. As to quaternary structure, monomer. It depends on Zn(2+) as a cofactor.

The protein localises to the cytoplasm. The enzyme catalyses tRNA(Cys) + L-cysteine + ATP = L-cysteinyl-tRNA(Cys) + AMP + diphosphate. This is Cysteine--tRNA ligase from Acinetobacter baumannii (strain AB307-0294).